The sequence spans 373 residues: uncharacterized protein (373 aa).

This is an uncharacterized protein from Thermoproteus tenax.